A 53-amino-acid chain; its full sequence is Collagen alpha-1(I) chain (53 aa).

The interval 1 to 53 (SYGYBZKSAGVSVPGPMGPSGPRGLPGPPGAPGPZGFZGPPGZPGZPGSSGPM) is disordered. Lys-7 carries the allysine modification. The residue at position 8 (Ser-8) is a Phosphoserine. Residues 10-23 (GVSVPGPMGPSGPR) are compositionally biased toward low complexity. 6 positions are modified to 4-hydroxyproline: Pro-26, Pro-29, Pro-32, Pro-41, Pro-44, and Pro-47. The segment covering 34 to 53 (PZGFZGPPGZPGZPGSSGPM) has biased composition (low complexity).

This sequence belongs to the fibrillar collagen family. As to quaternary structure, trimers of one alpha 2(I) and two alpha 1(I) chains. Interacts with MRC2. Interacts with TRAM2. Interacts with MFAP4 in a Ca (2+)-dependent manner. In terms of processing, contains mostly 4-hydroxyproline. Proline residues at the third position of the tripeptide repeating unit (G-X-Y) are hydroxylated in some or all of the chains. Post-translationally, contains 3-hydroxyproline at a few sites. This modification occurs on the first proline residue in the sequence motif Gly-Pro-Hyp, where Hyp is 4-hydroxyproline. Lysine residues at the third position of the tripeptide repeating unit (G-X-Y) are 5-hydroxylated in some or all of the chains. In terms of processing, O-glycosylated on hydroxylated lysine residues. The O-linked glycan consists of a Glc-Gal disaccharide. As to expression, forms the fibrils of tendon, ligaments and bones. In bones the fibrils are mineralized with calcium hydroxyapatite.

It is found in the secreted. The protein resides in the extracellular space. The protein localises to the extracellular matrix. Its function is as follows. Type I collagen is a member of group I collagen (fibrillar forming collagen). The chain is Collagen alpha-1(I) chain (COL1A1) from Oryctolagus cuniculus (Rabbit).